Consider the following 283-residue polypeptide: Phosphatidylserine decarboxylase proenzyme (283 aa).

Residues D90, H143, and S248 each act as charge relay system; for autoendoproteolytic cleavage activity in the active site. The active-site Schiff-base intermediate with substrate; via pyruvic acid; for decarboxylase activity is S248. Position 248 is a pyruvic acid (Ser); by autocatalysis (S248).

This sequence belongs to the phosphatidylserine decarboxylase family. PSD-B subfamily. Prokaryotic type I sub-subfamily. As to quaternary structure, heterodimer of a large membrane-associated beta subunit and a small pyruvoyl-containing alpha subunit. Requires pyruvate as cofactor. Is synthesized initially as an inactive proenzyme. Formation of the active enzyme involves a self-maturation process in which the active site pyruvoyl group is generated from an internal serine residue via an autocatalytic post-translational modification. Two non-identical subunits are generated from the proenzyme in this reaction, and the pyruvate is formed at the N-terminus of the alpha chain, which is derived from the carboxyl end of the proenzyme. The autoendoproteolytic cleavage occurs by a canonical serine protease mechanism, in which the side chain hydroxyl group of the serine supplies its oxygen atom to form the C-terminus of the beta chain, while the remainder of the serine residue undergoes an oxidative deamination to produce ammonia and the pyruvoyl prosthetic group on the alpha chain. During this reaction, the Ser that is part of the protease active site of the proenzyme becomes the pyruvoyl prosthetic group, which constitutes an essential element of the active site of the mature decarboxylase.

It is found in the cell membrane. It catalyses the reaction a 1,2-diacyl-sn-glycero-3-phospho-L-serine + H(+) = a 1,2-diacyl-sn-glycero-3-phosphoethanolamine + CO2. It participates in phospholipid metabolism; phosphatidylethanolamine biosynthesis; phosphatidylethanolamine from CDP-diacylglycerol: step 2/2. Functionally, catalyzes the formation of phosphatidylethanolamine (PtdEtn) from phosphatidylserine (PtdSer). This Francisella tularensis subsp. mediasiatica (strain FSC147) protein is Phosphatidylserine decarboxylase proenzyme.